The sequence spans 297 residues: MKNKGKVIIISGPSGVGKGSVNGELLTNKDLKLEYSVSMTTRAPREGEVNGVNYFFVSKEEFANAIVNNELIEYANFVGNSYGTPRKYVEEKLNEGKNVILEIEVDGATQVLRNEENVLSIFLMPPTLNELESRIKGRATESDDKIKARLDKALLEIPLKHNYDYVVENDSVENAVSKITDILIREKCTESNEESKFKELVKIVENIVDQKYTYFINNWEANVKLLAHNKEAKKEANDFDARGELIKILSSEVYRKTLAHGDFSKINDVEYVDFKIQKLMFKINFFSIKQRSDFSGD.

In terms of domain architecture, Guanylate kinase-like spans 5 to 184; the sequence is GKVIIISGPS…AVSKITDILI (180 aa). 12–19 provides a ligand contact to ATP; the sequence is GPSGVGKG. Residues 205–297 form a unknown region; that stretch reads ENIVDQKYTY…IKQRSDFSGD (93 aa).

This sequence belongs to the guanylate kinase family.

The protein resides in the cytoplasm. The enzyme catalyses GMP + ATP = GDP + ADP. Functionally, essential for recycling GMP and indirectly, cGMP. This Mesoplasma florum (strain ATCC 33453 / NBRC 100688 / NCTC 11704 / L1) (Acholeplasma florum) protein is Guanylate kinase (gmk).